Reading from the N-terminus, the 348-residue chain is Sensor protein VraS (348 aa).

The next 2 membrane-spanning stretches (helical) occupy residues 13-33 (ILVY…VNII) and 43-63 (IFGI…CIIV). The Histidine kinase domain maps to 150 to 341 (RLARELHDSV…RIEVKAPLNK (192 aa)).

Its subcellular location is the cell membrane. It carries out the reaction ATP + protein L-histidine = ADP + protein N-phospho-L-histidine.. In terms of biological role, member of the two-component regulatory system VraS/VraR involved in the control of the cell wall peptidoglycan biosynthesis. Probably activates VraR by phosphorylation. This chain is Sensor protein VraS (vraS), found in Staphylococcus epidermidis (strain ATCC 35984 / DSM 28319 / BCRC 17069 / CCUG 31568 / BM 3577 / RP62A).